A 333-amino-acid chain; its full sequence is Cap-specific mRNA (nucleoside-2'-O-)-methyltransferase (333 aa).

Residue Tyr22 participates in mRNA binding. Gln39, Tyr66, Gly68, Gly72, Asp95, Arg97, Val116, and Asp138 together coordinate S-adenosyl-L-methionine. The binding to NPH-I stretch occupies residues 169–249 (PVASSLKWRC…NKIVRNKVVV (81 aa)). The binding to Rap94 stretch occupies residues 169–333 (PVASSLKWRC…NSKRSVRGNK (165 aa)). Lys175 functions as the For methyltransferase activity in the catalytic mechanism. MRNA contacts are provided by residues 177 to 180 (RCPF), Asp182, 205 to 207 (SAE), and Glu233.

This sequence belongs to the class I-like SAM-binding methyltransferase superfamily. Poxvirus/kinetoplastid 2'-O-MTase family. In terms of assembly, interacts with poly(A) polymerase catalytic subunit OPG063. Interacts with OPG109 and OPG123; these interactions might help linking transcription to capping and polyadenylation.

The protein resides in the virion. It catalyses the reaction a 5'-end (N(7)-methyl 5'-triphosphoguanosine)-ribonucleoside in mRNA + S-adenosyl-L-methionine = a 5'-end (N(7)-methyl 5'-triphosphoguanosine)-(2'-O-methyl-ribonucleoside) in mRNA + S-adenosyl-L-homocysteine + H(+). Displays methyltransferase, positive regulation of the poly(A) polymerase and transcription elongation activities. Involved in the modification of both mRNA ends and in intermediate and late gene positive transcription elongation. At the mRNAs 5' end, methylates the ribose 2' OH group of the first transcribed nucleotide, thereby producing a 2'-O-methylpurine cap. At the 3' end, functions as a processivity factor which stimulates the activity of the viral poly(A) polymerase OPG063 that creates mRNA's poly(A) tail. In the presence of OPG102, OPG063 does not dissociate from the RNA allowing tail elongation to around 250 adenylates. This chain is Cap-specific mRNA (nucleoside-2'-O-)-methyltransferase (OPG102), found in Homo sapiens (Human).